A 217-amino-acid polypeptide reads, in one-letter code: Pyridoxine/pyridoxamine 5'-phosphate oxidase (217 aa).

Substrate-binding positions include 13–16 and Lys71; that span reads RREY. FMN is bound by residues 66-71, 81-82, Arg87, Lys88, and Gln110; these read RIVLLK and YT. Substrate is bound by residues Tyr128, Arg132, and Ser136. Residues 145–146 and Trp190 contribute to the FMN site; that span reads QS. 196–198 is a substrate binding site; sequence RLH. Arg200 is a binding site for FMN.

The protein belongs to the pyridoxamine 5'-phosphate oxidase family. In terms of assembly, homodimer. The cofactor is FMN.

The enzyme catalyses pyridoxamine 5'-phosphate + O2 + H2O = pyridoxal 5'-phosphate + H2O2 + NH4(+). It carries out the reaction pyridoxine 5'-phosphate + O2 = pyridoxal 5'-phosphate + H2O2. It participates in cofactor metabolism; pyridoxal 5'-phosphate salvage; pyridoxal 5'-phosphate from pyridoxamine 5'-phosphate: step 1/1. It functions in the pathway cofactor metabolism; pyridoxal 5'-phosphate salvage; pyridoxal 5'-phosphate from pyridoxine 5'-phosphate: step 1/1. Its function is as follows. Catalyzes the oxidation of either pyridoxine 5'-phosphate (PNP) or pyridoxamine 5'-phosphate (PMP) into pyridoxal 5'-phosphate (PLP). The chain is Pyridoxine/pyridoxamine 5'-phosphate oxidase from Proteus mirabilis (strain HI4320).